Reading from the N-terminus, the 100-residue chain is Integration host factor subunit alpha (100 aa).

Belongs to the bacterial histone-like protein family. Heterodimer of an alpha and a beta chain.

Its function is as follows. This protein is one of the two subunits of integration host factor, a specific DNA-binding protein that functions in genetic recombination as well as in transcriptional and translational control. This is Integration host factor subunit alpha from Hahella chejuensis (strain KCTC 2396).